The primary structure comprises 273 residues: MRQVAFYGKGGIGKSTTQQNTAAALASMGYRLMVVGCDPKADCTRLLLRGVRQPSVLDTLRDVGPESVQLEKVVVQGYGGVKCVESGGPEPGVGCGGRGVITAIQTLETLGAYKDDLDYVFYDVLGDVVCGGFAMPIREGYAEEIYIVCSGEYMALFAANNICKGIKKFAERGYARLGGLVCNSRLVENEQALVKEFARRLNTKMIHFIPRSKDVQRAEINKKTVIDYDPDLPQAQEYRELARKIDENDEFTIPTPITQEELEDLMREYGIVD.

8-15 (GKGGIGKS) provides a ligand contact to ATP. Cys95 serves as a coordination point for [4Fe-4S] cluster. Arg98 bears the ADP-ribosylarginine; by dinitrogenase reductase ADP-ribosyltransferase mark. Cys130 contributes to the [4Fe-4S] cluster binding site.

This sequence belongs to the NifH/BchL/ChlL family. In terms of assembly, homodimer. The cofactor is [4Fe-4S] cluster. Post-translationally, the reversible ADP-ribosylation of Arg-98 inactivates the nitrogenase reductase and regulates nitrogenase activity.

It carries out the reaction N2 + 8 reduced [2Fe-2S]-[ferredoxin] + 16 ATP + 16 H2O = H2 + 8 oxidized [2Fe-2S]-[ferredoxin] + 2 NH4(+) + 16 ADP + 16 phosphate + 6 H(+). The key enzymatic reactions in nitrogen fixation are catalyzed by the nitrogenase complex, which has 2 components: the iron protein and the molybdenum-iron protein. The protein is Nitrogenase iron protein of Roseiflexus castenholzii (strain DSM 13941 / HLO8).